We begin with the raw amino-acid sequence, 562 residues long: Isochorismate synthase 2, chloroplastic (562 aa).

A chloroplast-targeting transit peptide spans 1 to 55; that stretch reads MASLQCSFHFLGTNPKKYNPSSIFQSYSRTSFTKLSSRVSRQRFLRCTLSMNGCE.

The protein belongs to the isochorismate synthase family. Mg(2+) serves as cofactor.

The protein localises to the plastid. Its subcellular location is the chloroplast. The catalysed reaction is chorismate = isochorismate. The protein operates within siderophore biosynthesis; salicylate biosynthesis. In terms of biological role, isochorismate synthase involved in the synthesis of salicylic acid (SA) required for both local and systemic acquired resistance (LAR and SAR) while SA synthesized through the phenylalanine ammonium lyase (PAL) pathway seems to potentiate plant cell death. Also involved in phylloquinone (vitamin K1) synthesis. Has no isochorismate pyruvate lyase (IPL) activity. The chain is Isochorismate synthase 2, chloroplastic (ICS2) from Arabidopsis thaliana (Mouse-ear cress).